We begin with the raw amino-acid sequence, 118 residues long: Large ribosomal subunit protein bL20 (118 aa).

Belongs to the bacterial ribosomal protein bL20 family.

In terms of biological role, binds directly to 23S ribosomal RNA and is necessary for the in vitro assembly process of the 50S ribosomal subunit. It is not involved in the protein synthesizing functions of that subunit. The sequence is that of Large ribosomal subunit protein bL20 from Thermotoga neapolitana (strain ATCC 49049 / DSM 4359 / NBRC 107923 / NS-E).